We begin with the raw amino-acid sequence, 247 residues long: 23S rRNA (guanosine-2'-O-)-methyltransferase RlmB (247 aa).

Residues glycine 197, isoleucine 217, and leucine 226 each coordinate S-adenosyl-L-methionine.

This sequence belongs to the class IV-like SAM-binding methyltransferase superfamily. RNA methyltransferase TrmH family. RlmB subfamily.

Its subcellular location is the cytoplasm. The catalysed reaction is guanosine(2251) in 23S rRNA + S-adenosyl-L-methionine = 2'-O-methylguanosine(2251) in 23S rRNA + S-adenosyl-L-homocysteine + H(+). Functionally, specifically methylates the ribose of guanosine 2251 in 23S rRNA. The chain is 23S rRNA (guanosine-2'-O-)-methyltransferase RlmB from Vibrio cholerae serotype O1 (strain ATCC 39315 / El Tor Inaba N16961).